The primary structure comprises 55 residues: Large ribosomal subunit protein bL33 (55 aa).

It belongs to the bacterial ribosomal protein bL33 family.

The sequence is that of Large ribosomal subunit protein bL33 from Dinoroseobacter shibae (strain DSM 16493 / NCIMB 14021 / DFL 12).